A 692-amino-acid chain; its full sequence is Furin-like protease kpc-1 (692 aa).

An N-terminal signal peptide occupies residues 1-33 (MSNISWYRHCSVRLQLVTLALFLLLGSASLGSA). A glycan (N-linked (GlcNAc...) asparagine) is linked at N3. The propeptide occupies 34 to 139 (HIDEEFEDDV…QQVAKRRVKR (106 aa)). Topologically, residues 140-670 (GYRRIRRHTD…RSVQMEATSS (531 aa)) are lumenal. Residues 152–177 (DIFEEDDDGTQISKSRNRKHPDPNDP) form a disordered region. Ca(2+) is bound at residue D176. One can recognise a Peptidase S8 domain in the interval 182-503 (MWYLNRGEHH…YGLMDAGAMV (322 aa)). D221 functions as the Charge relay system in the catalytic mechanism. A substrate-binding site is contributed by D222. Positions 230, 242, 247, and 249 each coordinate Ca(2+). The disordered stretch occupies residues 230 to 249 (DISPNYDERASYDVNDRDND). 259–260 (EN) lines the substrate pocket. H262 functions as the Charge relay system in the catalytic mechanism. I273 contributes to the Ca(2+) binding site. N275 carries N-linked (GlcNAc...) asparagine glycosylation. Ca(2+) is bound by residues N276, L278, and I280. Intrachain disulfides connect C279-C428 and C371-C401. Residues E304, 321 to 326 (SWGPDD), D332, and 360 to 363 (ASGN) contribute to the substrate site. D326 provides a ligand contact to Ca(2+). D369 contacts Ca(2+). Substrate-binding residues include D374 and Y376. E399 is a Ca(2+) binding site. Residue S436 is the Charge relay system of the active site. S436 provides a ligand contact to substrate. N-linked (GlcNAc...) asparagine glycans are attached at residues N455 and N487. Residues 512–646 (VDEQHRCRQF…ELVLYGTDRE (135 aa)) enclose the P/Homo B domain. A disulfide bridge connects residues C518 and C544. Residues 570–572 (RGD) carry the Cell attachment site motif. The helical transmembrane segment at 671 to 692 (GTQYSIFHVITLVILTFSQILY) threads the bilayer.

The protein belongs to the peptidase S8 family. Furin subfamily. In terms of assembly, interacts (via extracellular domain) with receptor dma-1 (via extracellular domain); the interaction promotes dma-1 internalization. It depends on Ca(2+) as a cofactor. As to expression, expressed in the nervous system including the ventral nerve cord, the nerve ring and the retrovesicular ganglion, and in epithelial cells. Expressed in IL2 neurons. Expressed in PVD mechanosensory neurons. Expressed in pharynx with strong expression in the g2 pharyngeal gland cells and vpi pharyngeal intestinal valve cells. Expressed in intestine.

It localises to the cell membrane. It is found in the perikaryon. Its subcellular location is the cell projection. The protein localises to the axon. Its function is as follows. Furin-like protease which cleaves proproteins at the RX(K/R)R consensus motif. During neuronal development, regulates the formation and extension of dendrite branches and cellular positioning of various type of neurons. Together with chin-1 and cdc-42, plays a role in the development of the neuropil and is required for the guidance of axons from neurons, including SubL pioneer neurons and AIY interneurons, into the nerve ring. Its role in axon guidance in glia and pioneer neurons may be through ensuring the fmi-1 protein is correctly localized to the nerve ring. Promotes the formation, extension and self-avoidance of dendritic branches of PVD and FLP mechanosensory neurons. In PVD neurons, regulates plasma membrane levels of branching receptor dma-1 by targeting it to late endosomes and thus promotes normal dendrite branching and dendrite self-avoidance. Also controls dendrite extension in AIY and D-type motoneurons, dendrite branching in AQR sensory neurons and VC4/5 motoneurons, the normal number of dendritic branches in AVL neurons and the positioning of HSN and ALM/PLM neurons. Dispensable for maintaining dendrite branching in adults. Also regulates dauer-specific dendritic branching of IL2 neurons and dauer-specific nictation behavior. Under adverse environmental conditions, may promote dauer formation by processing insulin-like proteins ins-1 and ins-18, two daf-2/InsR antagonists. This is Furin-like protease kpc-1 from Caenorhabditis elegans.